The primary structure comprises 158 residues: Ribosome maturation factor RimP (158 aa).

The protein belongs to the RimP family.

The protein localises to the cytoplasm. Required for maturation of 30S ribosomal subunits. This Lactiplantibacillus plantarum (strain ATCC BAA-793 / NCIMB 8826 / WCFS1) (Lactobacillus plantarum) protein is Ribosome maturation factor RimP.